A 193-amino-acid chain; its full sequence is Tetrahydromethanopterin S-methyltransferase subunit A 2 (193 aa).

The Cytoplasmic segment spans residues 1-38 (MADKKPTAENWPVVSGDYIVGDPESPVAVTTLASHNED). Residues 39-58 (IPAAAGAAIAGPCKTENLGI) traverse the membrane as a helical segment. The Extracellular segment spans residues 59-193 (EKVVANIISN…SESEKIESEA (135 aa)). H84 is a binding site for 5-hydroxybenzimidazolylcob(I)amide. The disordered stretch occupies residues 174 to 193 (SKKSSFVESSSESEKIESEA).

This sequence belongs to the MtrA family. In terms of assembly, the complex is composed of 8 subunits; MtrA, MtrB, MtrC, MtrD, MtrE, MtrF, MtrG and MtrH. It depends on 5-hydroxybenzimidazolylcob(I)amide as a cofactor.

The protein resides in the cell membrane. The catalysed reaction is 5-methyl-5,6,7,8-tetrahydromethanopterin + coenzyme M + 2 Na(+)(in) = 5,6,7,8-tetrahydromethanopterin + methyl-coenzyme M + 2 Na(+)(out). It functions in the pathway one-carbon metabolism; methanogenesis from CO(2); methyl-coenzyme M from 5,10-methylene-5,6,7,8-tetrahydromethanopterin: step 2/2. Functionally, part of a complex that catalyzes the formation of methyl-coenzyme M and tetrahydromethanopterin from coenzyme M and methyl-tetrahydromethanopterin. This is an energy-conserving, sodium-ion translocating step. This chain is Tetrahydromethanopterin S-methyltransferase subunit A 2, found in Methanobrevibacter ruminantium (strain ATCC 35063 / DSM 1093 / JCM 13430 / OCM 146 / M1) (Methanobacterium ruminantium).